A 164-amino-acid polypeptide reads, in one-letter code: UPF0114 protein Avin_40830 (164 aa).

A run of 4 helical transmembrane segments spans residues 15-35, 53-73, 103-125, and 136-156; these read LLAP…LKFF, LILV…LVMV, GSLK…LRVF, and LLWY…MSYL.

Belongs to the UPF0114 family.

It is found in the cell membrane. The sequence is that of UPF0114 protein Avin_40830 from Azotobacter vinelandii (strain DJ / ATCC BAA-1303).